Reading from the N-terminus, the 412-residue chain is Divalent metal cation transporter MntH (412 aa).

At 1–19 (MTNYRVESSSGRAARKMRL) the chain is on the cytoplasmic side. A helical membrane pass occupies residues 20–39 (ALMGPAFIAAIGYIDPGNFA). At 40 to 51 (TNIQAGASFGYQ) the chain is on the periplasmic side. A helical membrane pass occupies residues 52-71 (LLWVVVWANLMAMLIQILSA). At 72-95 (KLGIATGKNLAEQIRDHYPRPVVW) the chain is on the cytoplasmic side. The helical transmembrane segment at 96 to 118 (FYWVQAEIIAMATDLAEFIGAAI) threads the bilayer. At 119–125 (GFKLILG) the chain is on the periplasmic side. The helical transmembrane segment at 126–145 (VSLLQGAVLTGIATFLILML) threads the bilayer. Topologically, residues 146–155 (QRRGQKPLEK) are cytoplasmic. Residues 156-175 (VIGGLLLFVAAAYIVELIFS) traverse the membrane as a helical segment. At 176 to 196 (QPNLAQLGKGMVIPSLPTSEA) the chain is on the periplasmic side. Residues 197-220 (VFLAAGVLGATIMPHVIYLHSSLT) traverse the membrane as a helical segment. Topologically, residues 221–238 (QHLHGGSRQQRYSATKWD) are cytoplasmic. A helical membrane pass occupies residues 239 to 258 (VAIAMTIAGFVNLVMMATAA). The Periplasmic portion of the chain corresponds to 259 to 276 (AAFHFSGHTGVADLDEAY). A helical membrane pass occupies residues 277–297 (LTLQPLLSHAAATVFGLSLVA). At 298-327 (AGLSSTVVGTLAGQVVMQGFIRFHIPLWVR) the chain is on the cytoplasmic side. A helical membrane pass occupies residues 328–344 (RTVTMLPSFIVILMGLD). The Periplasmic segment spans residues 345 to 350 (PTRILV). A helical membrane pass occupies residues 351-370 (MSQVLLSFGIALALVPLLIF). Residues 371–387 (TSDSKLMGDLVNSKRVK) are Cytoplasmic-facing. Residues 388-406 (QTGWVIVVLVVALNIWLLV) form a helical membrane-spanning segment. Residues 407-412 (GTALGL) lie on the Periplasmic side of the membrane.

Belongs to the NRAMP family.

The protein resides in the cell inner membrane. In terms of biological role, h(+)-stimulated, divalent metal cation uptake system. The polypeptide is Divalent metal cation transporter MntH (Shigella flexneri serotype 5b (strain 8401)).